The chain runs to 141 residues: Nucleoside diphosphate kinase (141 aa).

Lysine 11, phenylalanine 59, arginine 87, threonine 93, arginine 104, and asparagine 114 together coordinate ATP. The active-site Pros-phosphohistidine intermediate is the histidine 117.

Belongs to the NDK family. As to quaternary structure, homotetramer. The cofactor is Mg(2+).

The protein resides in the cytoplasm. It carries out the reaction a 2'-deoxyribonucleoside 5'-diphosphate + ATP = a 2'-deoxyribonucleoside 5'-triphosphate + ADP. It catalyses the reaction a ribonucleoside 5'-diphosphate + ATP = a ribonucleoside 5'-triphosphate + ADP. In terms of biological role, major role in the synthesis of nucleoside triphosphates other than ATP. The ATP gamma phosphate is transferred to the NDP beta phosphate via a ping-pong mechanism, using a phosphorylated active-site intermediate. The protein is Nucleoside diphosphate kinase of Burkholderia thailandensis (strain ATCC 700388 / DSM 13276 / CCUG 48851 / CIP 106301 / E264).